A 722-amino-acid chain; its full sequence is G2-specific protein kinase fin1 (722 aa).

The Protein kinase domain occupies Tyr4–Leu281. ATP-binding positions include Ile10 to Ile18 and Lys33. Residue Asp151 is the Proton acceptor of the active site. Residues Leu528 to Lys557 are disordered. Positions Thr535–Pro546 are enriched in polar residues.

The protein belongs to the protein kinase superfamily. Ser/Thr protein kinase family. NIMA subfamily.

It localises to the cytoplasm. It is found in the cytoskeleton. The protein localises to the microtubule organizing center. Its subcellular location is the spindle pole body. The catalysed reaction is L-seryl-[protein] + ATP = O-phospho-L-seryl-[protein] + ADP + H(+). It catalyses the reaction L-threonyl-[protein] + ATP = O-phospho-L-threonyl-[protein] + ADP + H(+). Functionally, promotes chromosome condensation and nuclear envelope dynamics during mitosis. Activity appears at metaphase-anaphase transition. In Schizosaccharomyces pombe (strain 972 / ATCC 24843) (Fission yeast), this protein is G2-specific protein kinase fin1 (fin1).